A 115-amino-acid polypeptide reads, in one-letter code: UPF0738 protein SSP1780 (115 aa).

This sequence belongs to the UPF0738 family.

This is UPF0738 protein SSP1780 from Staphylococcus saprophyticus subsp. saprophyticus (strain ATCC 15305 / DSM 20229 / NCIMB 8711 / NCTC 7292 / S-41).